A 488-amino-acid chain; its full sequence is Ribulose bisphosphate carboxylase large chain (488 aa).

Substrate contacts are provided by Asn-127 and Thr-177. The active-site Proton acceptor is Lys-179. Lys-181 is a binding site for substrate. 3 residues coordinate Mg(2+): Lys-205, Asp-207, and Glu-208. Lys-205 carries the N6-carboxylysine modification. His-297 functions as the Proton acceptor in the catalytic mechanism. Substrate contacts are provided by Arg-298, His-330, and Ser-382.

It belongs to the RuBisCO large chain family. Type I subfamily. As to quaternary structure, heterohexadecamer of 8 large chains and 8 small chains. Requires Mg(2+) as cofactor.

The protein resides in the plastid. Its subcellular location is the chloroplast. It carries out the reaction 2 (2R)-3-phosphoglycerate + 2 H(+) = D-ribulose 1,5-bisphosphate + CO2 + H2O. The enzyme catalyses D-ribulose 1,5-bisphosphate + O2 = 2-phosphoglycolate + (2R)-3-phosphoglycerate + 2 H(+). In terms of biological role, ruBisCO catalyzes two reactions: the carboxylation of D-ribulose 1,5-bisphosphate, the primary event in carbon dioxide fixation, as well as the oxidative fragmentation of the pentose substrate in the photorespiration process. Both reactions occur simultaneously and in competition at the same active site. The polypeptide is Ribulose bisphosphate carboxylase large chain (Olisthodiscus luteus (Marine phytoflagellate)).